The following is a 1316-amino-acid chain: DNA-directed RNA polymerase subunit beta' (1316 aa).

Zn(2+) is bound by residues cysteine 60, cysteine 62, cysteine 75, and cysteine 78. Mg(2+) is bound by residues aspartate 535, aspartate 537, and aspartate 539. The Zn(2+) site is built by cysteine 891, cysteine 968, cysteine 975, and cysteine 978.

Belongs to the RNA polymerase beta' chain family. In terms of assembly, the RNAP catalytic core consists of 2 alpha, 1 beta, 1 beta' and 1 omega subunit. When a sigma factor is associated with the core the holoenzyme is formed, which can initiate transcription. Requires Mg(2+) as cofactor. It depends on Zn(2+) as a cofactor.

The enzyme catalyses RNA(n) + a ribonucleoside 5'-triphosphate = RNA(n+1) + diphosphate. In terms of biological role, DNA-dependent RNA polymerase catalyzes the transcription of DNA into RNA using the four ribonucleoside triphosphates as substrates. In Mycobacterium marinum (strain ATCC BAA-535 / M), this protein is DNA-directed RNA polymerase subunit beta'.